The sequence spans 715 residues: Interferon-induced GTP-binding protein Mx2 (715 aa).

In terms of domain architecture, Dynamin-type G spans 115-387 (DLALPAIAVI…LIMHIQKSLP (273 aa)). A G1 motif region spans residues 125 to 132 (GDQSSGKS). A GTP-binding site is contributed by 125 to 132 (GDQSSGKS). The G2 motif stretch occupies residues 150–152 (VTR). The G3 motif stretch occupies residues 225–228 (DLPG). Residues 225–229 (DLPGI) and 294–297 (TKPD) contribute to the GTP site. The G4 motif stretch occupies residues 294–297 (TKPD). The G5 motif stretch occupies residues 326-329 (KCRG). The GED domain maps to 623–714 (FTEIGIHLNA…ALCQFSSKEI (92 aa)).

This sequence belongs to the TRAFAC class dynamin-like GTPase superfamily. Dynamin/Fzo/YdjA family.

The protein localises to the cytoplasm. Its subcellular location is the nucleus. It localises to the nuclear pore complex. In terms of biological role, interferon-induced dynamin-like GTPase with potent antiviral activity against human immunodeficiency virus type 1 (HIV-1). Acts by targeting the viral capsid and affects the nuclear uptake and/or stability of the HIV-1 replication complex and the subsequent chromosomal integration of the proviral DNA. Exhibits antiviral activity also against simian immunodeficiency virus (SIV-mnd). May play a role in regulating nucleocytoplasmic transport and cell-cycle progression. This is Interferon-induced GTP-binding protein Mx2 (MX2) from Homo sapiens (Human).